The primary structure comprises 129 residues: Small ribosomal subunit protein uS11 (129 aa).

Belongs to the universal ribosomal protein uS11 family. Part of the 30S ribosomal subunit. Interacts with proteins S7 and S18. Binds to IF-3.

Functionally, located on the platform of the 30S subunit, it bridges several disparate RNA helices of the 16S rRNA. Forms part of the Shine-Dalgarno cleft in the 70S ribosome. This chain is Small ribosomal subunit protein uS11, found in Pelotomaculum thermopropionicum (strain DSM 13744 / JCM 10971 / SI).